Here is a 447-residue protein sequence, read N- to C-terminus: Alkylglycerol monooxygenase (447 aa).

Helical transmembrane passes span 43 to 63 (ATPF…ILKG) and 111 to 131 (WDSP…YYWF). The Fatty acid hydroxylase domain maps to 118–249 (YLTFLGVDFG…LIIWDRIFGT (132 aa)). Residues 132 to 136 (HRMAH) carry the Histidine box-1 motif. A Histidine box-2 motif is present at residues 145–149 (HQAHH). A helical transmembrane segment spans residues 170–190 (SWVFYCPLALFVPPSVFAVHI). The Histidine box-3 signature appears at 221 to 225 (HRVHH). Helical transmembrane passes span 334-354 (FLKI…EETF), 363-383 (VTIL…GFLL), and 413-433 (IESL…FWGV).

This sequence belongs to the sterol desaturase family. TMEM195 subfamily. It depends on Fe cation as a cofactor.

Its subcellular location is the endoplasmic reticulum membrane. The catalysed reaction is 1-O-(1,2-saturated-alkyl)-sn-glycerol + (6R)-L-erythro-5,6,7,8-tetrahydrobiopterin + O2 = a 1-(1-hydroxyalkyl)-sn-glycerol + (6R)-L-erythro-6,7-dihydrobiopterin + H2O. Functionally, glyceryl-ether monooxygenase that cleaves the O-alkyl bond of ether lipids. Ether lipids are essential components of brain membranes. In Rattus norvegicus (Rat), this protein is Alkylglycerol monooxygenase (Agmo).